The primary structure comprises 206 residues: uncharacterized protein (206 aa).

Disordered stretches follow at residues 38–88 (RLQQ…NKNA) and 160–206 (HQNT…SVQE). Residues 40–73 (QQQQQQQQQQQQNRTASSLQQPQQQQPISPPLFL) are compositionally biased toward low complexity. A Phosphoserine modification is found at Ser-68. The span at 78-88 (TSENSNLNKNA) shows a compositional bias: polar residues. Residues 165-186 (SSSNPGSMSSSPPNSASSIFNS) are compositionally biased toward low complexity. The span at 192–206 (PYTSQSFNPLESVQE) shows a compositional bias: polar residues.

It localises to the cytoplasm. This is an uncharacterized protein from Saccharomyces cerevisiae (strain ATCC 204508 / S288c) (Baker's yeast).